We begin with the raw amino-acid sequence, 343 residues long: Glyceraldehyde-3-phosphate dehydrogenase (343 aa).

NAD(+) contacts are provided by residues 13 to 14 (TI) and G111. Residue 140 to 142 (SCN) participates in D-glyceraldehyde 3-phosphate binding. C141 acts as the Nucleophile in catalysis. NAD(+) is bound at residue R169. 195–196 (HA) serves as a coordination point for D-glyceraldehyde 3-phosphate. Q302 contributes to the NAD(+) binding site.

It belongs to the glyceraldehyde-3-phosphate dehydrogenase family. In terms of assembly, homotetramer.

Its subcellular location is the cytoplasm. It carries out the reaction D-glyceraldehyde 3-phosphate + phosphate + NADP(+) = (2R)-3-phospho-glyceroyl phosphate + NADPH + H(+). The catalysed reaction is D-glyceraldehyde 3-phosphate + phosphate + NAD(+) = (2R)-3-phospho-glyceroyl phosphate + NADH + H(+). Its pathway is carbohydrate degradation; glycolysis; pyruvate from D-glyceraldehyde 3-phosphate: step 1/5. In Hyperthermus butylicus (strain DSM 5456 / JCM 9403 / PLM1-5), this protein is Glyceraldehyde-3-phosphate dehydrogenase.